A 222-amino-acid polypeptide reads, in one-letter code: Eukaryotic translation initiation factor 4E-2 (222 aa).

Positions 1-20 (MVDEVEKPVSLEESKTNTRE) are enriched in basic and acidic residues. The disordered stretch occupies residues 1-35 (MVDEVEKPVSLEESKTNTREVEEEGEIVGESDDTM). A compositionally biased stretch (acidic residues) spans 21 to 33 (VEEEGEIVGESDD). 2 EIF4G-binding regions span residues 47-50 (HALE) and 57-93 (FDNP…NNIH). Residues 65–70 (KQAAWG), Lys-97, and 115–116 (WE) contribute to the mRNA site. The cysteines at positions 120 and 158 are disulfide-linked. The EIF4G-binding stretch occupies residues 141 to 150 (YTLLAMIGEQ). MRNA contacts are provided by residues 165–170 (RVRQEK) and 210–214 (KKLDR).

This sequence belongs to the eukaryotic initiation factor 4E family. EIF4F is a multi-subunit complex, the composition of which varies with external and internal environmental conditions. It is composed of at least EIF4A, EIF4E and EIF4G. EIF4E is also known to interact with other partners. In higher plants two isoforms of EIF4F have been identified, named isoform EIF4F and isoform EIF(iso)4F. Isoform EIF4F has subunits p220 and p26, whereas isoform EIF(iso)4F has subunits p82 and p28. As to quaternary structure, (Microbial infection) Interacts with potyvirus viral genome-linked protein (VPg); this interaction is possible in susceptible hosts but impaired in resistant plants. In terms of processing, according to the redox status, the Cys-120-Cys-158 disulfide bridge may have a role in regulating protein function by affecting its ability to bind capped mRNA. In terms of tissue distribution, strongly expressed in susceptible plants but not in resistant ones.

It localises to the nucleus. Its subcellular location is the cytoplasm. Its function is as follows. Component of the protein complex eIF4F, which is involved in the recognition of the mRNA cap, ATP-dependent unwinding of 5'-terminal secondary structure and recruitment of mRNA to the ribosome. Recognizes and binds the 7-methylguanosine-containing mRNA cap during an early step in the initiation of protein synthesis and facilitates ribosome binding by inducing the unwinding of the mRNAs secondary structures. Key component of recessive resistance to potyviruses. (Microbial infection) Susceptibility host factor required for viral infection (e.g. potato virus Y (PVY) and pepper mottle virus (PepMoV)) by recruiting viral RNAs to the host ribosomal complex via an interaction with viral genome-linked protein (VPg). This chain is Eukaryotic translation initiation factor 4E-2, found in Nicotiana tabacum (Common tobacco).